Reading from the N-terminus, the 158-residue chain is Large ribosomal subunit protein uL15 (158 aa).

The segment covering 1-13 (MKLNEIKDNEGST) has biased composition (basic and acidic residues). The tract at residues 1-44 (MKLNEIKDNEGSTHSRKRLGRGIGSGSGKTAGRGVKGQKSRSGV) is disordered. Over residues 21 to 35 (RGIGSGSGKTAGRGV) the composition is skewed to gly residues.

The protein belongs to the universal ribosomal protein uL15 family. As to quaternary structure, part of the 50S ribosomal subunit.

In terms of biological role, binds to the 23S rRNA. This chain is Large ribosomal subunit protein uL15, found in Rhizobium etli (strain ATCC 51251 / DSM 11541 / JCM 21823 / NBRC 15573 / CFN 42).